The primary structure comprises 108 residues: MKDVTKVALLIARAMCTSSGTFVFELAFSIAECAGRPLGGGRSKYARRRRAISIARCHRCYRLWPPTVFTTRCDNKYCVPGISYNVRVAQFIDEGVTEVIPSVINKRE.

The basic stretch occupies residues 47–50 (RRRR). Residues 57–78 (CHRCYRLWPPTVFTTRCDNKYC) form a C4-type zinc finger.

This sequence belongs to the carlaviruses nucleic acid-binding protein family.

In terms of biological role, suppressor of viral-induced RNA silencing. The potential mechanism of action is based on sequestering siRNAs. This is RNA silencing suppressor from Solanum tuberosum (Potato).